The chain runs to 429 residues: Divergent protein kinase domain 2A (429 aa).

Residues 1-34 (MLRLASLKFGRLFRYAKVLFAASLLVVMLLNTHS) form the signal peptide.

The protein belongs to the DIPK family.

The protein localises to the cytoplasmic vesicle. The protein resides in the COPI-coated vesicle. It is found in the golgi apparatus. Its subcellular location is the secreted. In terms of biological role, may play a role in cardiomyocyte proliferation through paracrine signaling and activation of the PPI3K-AKT-CDK7 signaling cascade. The polypeptide is Divergent protein kinase domain 2A (dipk2a) (Xenopus tropicalis (Western clawed frog)).